The following is a 364-amino-acid chain: Peptide chain release factor 2 (364 aa).

Gln251 bears the N5-methylglutamine mark.

This sequence belongs to the prokaryotic/mitochondrial release factor family. Methylated by PrmC. Methylation increases the termination efficiency of RF2.

The protein resides in the cytoplasm. Its function is as follows. Peptide chain release factor 2 directs the termination of translation in response to the peptide chain termination codons UGA and UAA. In Buchnera aphidicola subsp. Schizaphis graminum (strain Sg), this protein is Peptide chain release factor 2 (prfB).